The following is a 92-amino-acid chain: NELL2-interacting cell ontogeny regulator 1 (92 aa).

The N-terminal stretch at 1 to 30 (MALPSAWSVMRVVIPFISVLGLLGVRLVGA) is a signal peptide.

This sequence belongs to the NICOL family.

The protein resides in the secreted. It is found in the cytoplasm. Its subcellular location is the perinuclear region. MRNA-binding protein which interacts with a range of target mRNAs and may promote extracellular matrix production. May function as a component of lumicrine signaling and may play a crucial role in epididymal-mediated sperm maturation and male fertility. This is NELL2-interacting cell ontogeny regulator 1 from Gallus gallus (Chicken).